Here is a 500-residue protein sequence, read N- to C-terminus: ATP synthase subunit alpha (500 aa).

167–174 (GDRQTGKT) provides a ligand contact to ATP.

The protein belongs to the ATPase alpha/beta chains family. As to quaternary structure, F-type ATPases have 2 components, CF(1) - the catalytic core - and CF(0) - the membrane proton channel. CF(1) has five subunits: alpha(3), beta(3), gamma(1), delta(1), epsilon(1). CF(0) has three main subunits: a(1), b(2) and c(9-12). The alpha and beta chains form an alternating ring which encloses part of the gamma chain. CF(1) is attached to CF(0) by a central stalk formed by the gamma and epsilon chains, while a peripheral stalk is formed by the delta and b chains.

The protein resides in the cell inner membrane. The enzyme catalyses ATP + H2O + 4 H(+)(in) = ADP + phosphate + 5 H(+)(out). Produces ATP from ADP in the presence of a proton gradient across the membrane. The alpha chain is a regulatory subunit. The polypeptide is ATP synthase subunit alpha (Wolinella succinogenes (strain ATCC 29543 / DSM 1740 / CCUG 13145 / JCM 31913 / LMG 7466 / NCTC 11488 / FDC 602W) (Vibrio succinogenes)).